A 160-amino-acid polypeptide reads, in one-letter code: Glyoxalase domain-containing protein 5 (160 aa).

Residues 33 to 153 (RLDHLVLTVR…DHNLIEVSNY (121 aa)) enclose the VOC domain.

The protein belongs to the glyoxalase I family.

The protein is Glyoxalase domain-containing protein 5 (glod5) of Xenopus laevis (African clawed frog).